The following is a 158-amino-acid chain: Nascent polypeptide-associated complex subunit beta (158 aa).

Disordered stretches follow at residues Met-1–Leu-40 and Glu-119–Glu-158. Positions Gly-16–Lys-31 are enriched in basic residues. Positions Gly-34–Val-99 constitute an NAC-A/B domain. Residues Asp-137 to Asn-152 show a composition bias toward acidic residues.

The protein belongs to the NAC-beta family. As to quaternary structure, part of the nascent polypeptide-associated complex (NAC), consisting of EGD2 and EGD1. NAC associates with ribosomes via EGD1.

It is found in the cytoplasm. Its subcellular location is the nucleus. In terms of biological role, component of the nascent polypeptide-associated complex (NAC), a dynamic component of the ribosomal exit tunnel, protecting the emerging polypeptides from interaction with other cytoplasmic proteins to ensure appropriate nascent protein targeting. The NAC complex also promotes mitochondrial protein import by enhancing productive ribosome interactions with the outer mitochondrial membrane and blocks the inappropriate interaction of ribosomes translating non-secretory nascent polypeptides with translocation sites in the membrane of the endoplasmic reticulum. EGD1 may act as a transcription factor that exert a negative effect on the expression of several genes that are transcribed by RNA polymerase II. This Ajellomyces capsulatus (strain NAm1 / WU24) (Darling's disease fungus) protein is Nascent polypeptide-associated complex subunit beta (EGD1).